We begin with the raw amino-acid sequence, 179 residues long: Large ribosomal subunit protein uL5 (179 aa).

The protein belongs to the universal ribosomal protein uL5 family. Part of the 50S ribosomal subunit; part of the 5S rRNA/L5/L18/L25 subcomplex. Contacts the 5S rRNA and the P site tRNA. Forms a bridge to the 30S subunit in the 70S ribosome.

In terms of biological role, this is one of the proteins that bind and probably mediate the attachment of the 5S RNA into the large ribosomal subunit, where it forms part of the central protuberance. In the 70S ribosome it contacts protein S13 of the 30S subunit (bridge B1b), connecting the 2 subunits; this bridge is implicated in subunit movement. Contacts the P site tRNA; the 5S rRNA and some of its associated proteins might help stabilize positioning of ribosome-bound tRNAs. In Maridesulfovibrio salexigens (strain ATCC 14822 / DSM 2638 / NCIMB 8403 / VKM B-1763) (Desulfovibrio salexigens), this protein is Large ribosomal subunit protein uL5.